A 99-amino-acid chain; its full sequence is Turripeptide OL71 (99 aa).

Contains 5 disulfide bonds. In terms of tissue distribution, expressed by the venom duct.

The protein resides in the secreted. In terms of biological role, acts as a neurotoxin by inhibiting an ion channel. This chain is Turripeptide OL71, found in Iotyrris olangoensis (Sea snail).